Here is a 2033-residue protein sequence, read N- to C-terminus: Envoplakin (2033 aa).

The span at 1–27 (MFKGLSKGSQGKGSPKGSPAKGSPKGS) shows a compositional bias: low complexity. 2 disordered regions span residues 1–37 (MFKGLSKGSQGKGSPKGSPAKGSPKGSPSRHSRAATQ) and 65–85 (QQDRLNSEQSQALQHQQETGR). Positions 1 to 841 (MFKGLSKGSQ…LEPTLAVSAP (841 aa)) are globular 1. Residues 12–28 (KGSPKGSPAKGSPKGSP) form a 4 X 4 AA tandem repeats of K-G-S-P region. Residues 71-84 (SEQSQALQHQQETG) are compositionally biased toward polar residues. The stretch at 229–330 (YTHLQGCTRQ…LCICQETQLQ (102 aa)) is one Spectrin repeat. The span at 388 to 401 (TERATGDLQRRSRD) shows a compositional bias: basic and acidic residues. Disordered regions lie at residues 388-418 (TERATGDLQRRSRDVAPLPQRRNPPQQPLHV) and 891-916 (SEDIRRTHDAKQGSESPAQAGRESEA). The region spanning 413-470 (QQPLHVDSICDWDSGEVQLLQGERYKLVDNTDPHAWVVQGPGGETKRAPAACFCIPAP) is the SH3 domain. The interval 842-1673 (KRPRVAPLQE…AKVSREELSQ (832 aa)) is central fibrous rod domain. A coiled-coil region spans residues 845-1135 (RVAPLQESIQ…AISSVEPKVI (291 aa)). A compositionally biased stretch (basic and acidic residues) spans 891 to 902 (SEDIRRTHDAKQ). A Plectin 1 repeat occupies 1185–1226 (KQRPKVQLQERVHEIFQVDPETEQEITRLKAKLQEMAGKRSG). Phosphoserine is present on serine 1575. Residues 1614-1623 (QEESKLLSQK) are compositionally biased toward low complexity. Residues 1614–1636 (QEESKLLSQKTESERQKAAQRGQ) form a disordered region. The segment at 1674–2033 (ETQTRETNLS…ASPTVPRSLR (360 aa)) is globular 2. One copy of the Plectin 2 repeat lies at 1678 to 1713 (RETNLSTKISILEPETGKDMSPYEAYKRGIIDRGQY). The residue at position 1799 (serine 1799) is a Phosphoserine. Plectin repeat units follow at residues 1818–1855 (LGLGDDSFPIAGIYDTTTDNKCSIKTAVAKNMLDPITG), 1856–1893 (QKLLEAQAATGGIVDLLSRERYSVHKAMERGLIENTST), 1894–1931 (QRLLNAQKAFTGIEDPVTKKRLSVGEAVQKGWMPRESV), 1932–1969 (LPHLQVQHLTGGLIDPKRTGRIPIQQALLSGMISEELA), and 1970–2007 (QLLQDESSYEKDLTDPISKERLSYKEAMGRCRKDPLSG). Phosphoserine is present on serine 2025.

The protein belongs to the plakin or cytolinker family. In terms of assembly, may form a homodimer or a heterodimer with PPL. In terms of tissue distribution, exclusively expressed in stratified squamous epithelia.

The protein resides in the cell junction. The protein localises to the desmosome. It is found in the cornified envelope. It localises to the cytoplasm. Its subcellular location is the cytoskeleton. In terms of biological role, component of the cornified envelope of keratinocytes. May link the cornified envelope to desmosomes and intermediate filaments. This is Envoplakin (EVPL) from Homo sapiens (Human).